Reading from the N-terminus, the 481-residue chain is Dual specificity protein kinase CLK4 (481 aa).

2 disordered regions span residues 1–47 (MRHS…KPHH) and 102–143 (SKSS…EDDE). The segment covering 8–19 (HCPDWDSRESWG) has biased composition (basic and acidic residues). Basic residues-rich tracts occupy residues 106–119 (VRSR…KRNR) and 126–136 (SHSKSHRRKRS). Ser136 and Ser138 each carry phosphoserine. In terms of domain architecture, Protein kinase spans 159–475 (YEIVDTLGEG…LDEALQHPFF (317 aa)). Residues 165–173 (LGEGAFGKV) and Lys189 each bind ATP. Catalysis depends on Asp286, which acts as the Proton acceptor.

Belongs to the protein kinase superfamily. CMGC Ser/Thr protein kinase family. Lammer subfamily. In terms of assembly, interacts with UBL5. Autophosphorylates on all three types of residues. As to expression, expressed in the hippocampus, the cerebellum and the olfactory bulb.

The protein localises to the nucleus. It carries out the reaction L-seryl-[protein] + ATP = O-phospho-L-seryl-[protein] + ADP + H(+). It catalyses the reaction L-threonyl-[protein] + ATP = O-phospho-L-threonyl-[protein] + ADP + H(+). The enzyme catalyses L-tyrosyl-[protein] + ATP = O-phospho-L-tyrosyl-[protein] + ADP + H(+). With respect to regulation, TG003 inhibits its kinase activity and affects the regulation of alternative splicing mediated by phosphorylation of SR proteins. Dual specificity kinase acting on both serine/threonine and tyrosine-containing substrates. Phosphorylates serine- and arginine-rich (SR) proteins of the spliceosomal complex and may be a constituent of a network of regulatory mechanisms that enable SR proteins to control RNA splicing. Phosphorylates SRSF1 and SRSF3. Required for the regulation of alternative splicing of MAPT/TAU. Regulates the alternative splicing of tissue factor (F3) pre-mRNA in endothelial cells. This is Dual specificity protein kinase CLK4 (Clk4) from Mus musculus (Mouse).